A 519-amino-acid polypeptide reads, in one-letter code: ATP synthase subunit alpha, mitochondrial (519 aa).

An ATP-binding site is contributed by 188 to 195 (GDRQTGKS).

This sequence belongs to the ATPase alpha/beta chains family. As to quaternary structure, F-type ATPases have 2 components, CF(1) - the catalytic core - and CF(0) - the membrane proton channel. CF(1) has five subunits: alpha(3), beta(3), gamma(1), delta(1), epsilon(1). CF(0) has three main subunits: a, b and c.

It localises to the mitochondrion. The protein localises to the mitochondrion inner membrane. In terms of biological role, mitochondrial membrane ATP synthase (F(1)F(0) ATP synthase or Complex V) produces ATP from ADP in the presence of a proton gradient across the membrane which is generated by electron transport complexes of the respiratory chain. F-type ATPases consist of two structural domains, F(1) - containing the extramembraneous catalytic core, and F(0) - containing the membrane proton channel, linked together by a central stalk and a peripheral stalk. During catalysis, ATP synthesis in the catalytic domain of F(1) is coupled via a rotary mechanism of the central stalk subunits to proton translocation. Subunits alpha and beta form the catalytic core in F(1). Rotation of the central stalk against the surrounding alpha(3)beta(3) subunits leads to hydrolysis of ATP in three separate catalytic sites on the beta subunits. Subunit alpha does not bear the catalytic high-affinity ATP-binding sites. The sequence is that of ATP synthase subunit alpha, mitochondrial (atp1) from Dictyostelium citrinum (Slime mold).